A 274-amino-acid chain; its full sequence is Fatty-acid O-methyltransferase (274 aa).

It belongs to the methyltransferase superfamily.

It catalyses the reaction a fatty acid + S-adenosyl-L-methionine = a fatty acid methyl ester + S-adenosyl-L-homocysteine. O-methyltransferase that modifies the hydroxy group of the fatty acids. Oleate is the most effective fatty acid acceptor. This is Fatty-acid O-methyltransferase (mtf2) from Mycolicibacterium smegmatis (strain ATCC 700084 / mc(2)155) (Mycobacterium smegmatis).